We begin with the raw amino-acid sequence, 168 residues long: T-cell surface glycoprotein CD3 delta chain (168 aa).

Positions 1-21 (MEHSRFLSCLILAALLSQVNP) are cleaved as a signal peptide. Topologically, residues 22 to 102 (RILKVLEPED…CVELDTATLA (81 aa)) are extracellular. The cysteines at positions 37 and 74 are disulfide-linked. N-linked (GlcNAc...) asparagine glycosylation is found at asparagine 38 and asparagine 56. The chain crosses the membrane as a helical span at residues 103–123 (GMIITDIIATVLLALGVYCFA). Residues 124–168 (GHETGRFSRAADTQALMGNDQLYQPLRERNDAQYSRLGDKWARNK) are Cytoplasmic-facing. The 29-residue stretch at 135-163 (DTQALMGNDQLYQPLRERNDAQYSRLGDK) folds into the ITAM domain. A phosphotyrosine mark is found at tyrosine 146 and tyrosine 157.

The TCR-CD3 complex is composed of a CD3D/CD3E and a CD3G/CD3E heterodimers that preferentially associate with TCRalpha and TCRbeta, respectively, to form TCRalpha/CD3E/CD3G and TCRbeta/CD3G/CD3E trimers. In turn, the hexamer interacts with CD3Z homodimer to form the TCR-CD3 complex. Alternatively, TCRalpha and TCRbeta can be replaced by TCRgamma and TCRdelta. Interacts with coreceptors CD4 and CD8. Post-translationally, phosphorylated on Tyr residues after T-cell receptor triggering by LCK in association with CD4/CD8. As to expression, CD3D is mostly present on T-lymphocytes with its TCR-CD3 partners. Present also in fetal NK-cells.

The protein localises to the cell membrane. In terms of biological role, part of the TCR-CD3 complex present on T-lymphocyte cell surface that plays an essential role in adaptive immune response. When antigen presenting cells (APCs) activate T-cell receptor (TCR), TCR-mediated signals are transmitted across the cell membrane by the CD3 chains CD3D, CD3E, CD3G and CD3Z. All CD3 chains contain immunoreceptor tyrosine-based activation motifs (ITAMs) in their cytoplasmic domain. Upon TCR engagement, these motifs become phosphorylated by Src family protein tyrosine kinases LCK and FYN, resulting in the activation of downstream signaling pathways. In addition of this role of signal transduction in T-cell activation, CD3D plays an essential role in thymocyte differentiation. Indeed, participates in correct intracellular TCR-CD3 complex assembly and surface expression. In absence of a functional TCR-CD3 complex, thymocytes are unable to differentiate properly. Interacts with CD4 and CD8 and thus serves to establish a functional link between the TCR and coreceptors CD4 and CD8, which is needed for activation and positive selection of CD4 or CD8 T-cells. This chain is T-cell surface glycoprotein CD3 delta chain (CD3D), found in Bos taurus (Bovine).